Here is a 414-residue protein sequence, read N- to C-terminus: Putative MSV199 domain-containing protein 148R (414 aa).

Residues 209–293 (DKMQISSLET…DSVVEKLGIA (85 aa)) adopt a coiled-coil conformation.

The protein is Putative MSV199 domain-containing protein 148R of Acheta domesticus (House cricket).